Reading from the N-terminus, the 387-residue chain is Xylose isomerase (387 aa).

Active-site residues include His54 and Asp57. Glu181, Glu217, His220, Asp245, Asp255, Asp257, and Asp287 together coordinate Mg(2+).

The protein belongs to the xylose isomerase family. As to quaternary structure, homotetramer. The cofactor is Mg(2+).

It localises to the cytoplasm. It carries out the reaction alpha-D-xylose = alpha-D-xylulofuranose. This chain is Xylose isomerase, found in Streptomyces coelicolor (strain ATCC BAA-471 / A3(2) / M145).